Consider the following 1141-residue polypeptide: cGMP-inhibited 3',5'-cyclic phosphodiesterase 3A (1141 aa).

Residues 1–42 (MAVPGDAARVRDKPVHSGVSQAPTAGRDCHHRADPASPRDSG) form a disordered region. Helical transmembrane passes span 61 to 81 (LSSA…VRLV), 130 to 150 (LQPS…GLYL), 160 to 180 (AVAL…GLGV), 185 to 205 (LLSL…TWLV), 210 to 230 (LGVL…ISLE), and 232 to 252 (FKVA…ILLA). S312 is subject to Phosphoserine. Phosphoserine; by PKA and PKC is present on residues S428 and S438. The span at 436-448 (RVSSTWTTTTSAT) shows a compositional bias: low complexity. A disordered region spans residues 436 to 482 (RVSSTWTTTTSATGLPTLEPAPVRRDRSTSIKLQEAPSSSPDSWNNP). Residues 465 to 482 (SIKLQEAPSSSPDSWNNP) show a composition bias toward polar residues. Residues S492, S520, and S524 each carry the phosphoserine modification. The disordered stretch occupies residues 590–640 (RPYSQGNPADEPLERSGVATRTPSRTDDTAQVTSDYETNNNSDSSDIVQNE). Over residues 608–637 (ATRTPSRTDDTAQVTSDYETNNNSDSSDIV) the composition is skewed to polar residues. The interval 669–1141 (KPILAPEPLV…EEIPTQKPDQ (473 aa)) is interaction with SLFN12. Positions 674-1093 (PEPLVMDNLD…KMWKKVIEEE (420 aa)) constitute a PDEase domain. The active-site Proton donor is the H752. H752 contributes to the AMP binding site. Positions 756, 836, 837, and 950 each coordinate Mn(2+). The AMP site is built by D837, D950, and Q1001. D837 is a Mg(2+) binding site. Disordered regions lie at residues 1023 to 1062 (PGKW…ESPK) and 1100 to 1141 (ENQS…KPDQ). The segment covering 1029–1056 (DSDESGDTDDPEEEEEEAPAPNEEETCE) has biased composition (acidic residues). Residue S1033 is modified to Phosphoserine. At T1036 the chain carries Phosphothreonine. Residues 1100–1113 (ENQSLDQTPQSHSS) are compositionally biased toward polar residues. K1120 is covalently cross-linked (Glycyl lysine isopeptide (Lys-Gly) (interchain with G-Cter in SUMO2)). Positions 1125–1141 (EKGKPRGEEIPTQKPDQ) are enriched in basic and acidic residues.

Belongs to the cyclic nucleotide phosphodiesterase family. PDE3 subfamily. In terms of assembly, homodimer. Interacts with SLFN12; direct low affinity interaction which is stimulated by binding of 17beta-estradiol/E2 to PDE3A and that positively regulates the ribonuclease activity of SLFN12. Requires Mn(2+) as cofactor. It depends on Mg(2+) as a cofactor.

It localises to the membrane. It is found in the cytoplasm. The protein localises to the cytosol. It carries out the reaction a nucleoside 3',5'-cyclic phosphate + H2O = a nucleoside 5'-phosphate + H(+). The catalysed reaction is 3',5'-cyclic AMP + H2O = AMP + H(+). The enzyme catalyses 3',5'-cyclic GMP + H2O = GMP + H(+). It catalyses the reaction 3',5'-cyclic UMP + H2O = UMP + H(+). With respect to regulation, inhibited by cGMP. Inhibited by 17beta-estradiol. Inhibited by milrinone. Its function is as follows. Cyclic nucleotide phosphodiesterase with specificity for the second messengers cAMP and cGMP, which are key regulators of many important physiological processes. Also has activity toward cUMP. Independently of its catalytic activity it is part of an E2/17beta-estradiol-induced pro-apoptotic signaling pathway. E2 stabilizes the PDE3A/SLFN12 complex in the cytosol, promoting the dephosphorylation of SLFN12 and activating its pro-apoptotic ribosomal RNA/rRNA ribonuclease activity. This apoptotic pathway might be relevant in tissues with high concentration of E2 and be for instance involved in placenta remodeling. The sequence is that of cGMP-inhibited 3',5'-cyclic phosphodiesterase 3A from Homo sapiens (Human).